The primary structure comprises 305 residues: UDP-3-O-acyl-N-acetylglucosamine deacetylase (305 aa).

Zn(2+) is bound by residues H78, H237, and D241. Catalysis depends on H264, which acts as the Proton donor.

This sequence belongs to the LpxC family. It depends on Zn(2+) as a cofactor.

The enzyme catalyses a UDP-3-O-[(3R)-3-hydroxyacyl]-N-acetyl-alpha-D-glucosamine + H2O = a UDP-3-O-[(3R)-3-hydroxyacyl]-alpha-D-glucosamine + acetate. It functions in the pathway glycolipid biosynthesis; lipid IV(A) biosynthesis; lipid IV(A) from (3R)-3-hydroxytetradecanoyl-[acyl-carrier-protein] and UDP-N-acetyl-alpha-D-glucosamine: step 2/6. Catalyzes the hydrolysis of UDP-3-O-myristoyl-N-acetylglucosamine to form UDP-3-O-myristoylglucosamine and acetate, the committed step in lipid A biosynthesis. The sequence is that of UDP-3-O-acyl-N-acetylglucosamine deacetylase from Burkholderia ambifaria (strain MC40-6).